Reading from the N-terminus, the 375-residue chain is Thiamine-phosphate synthase (375 aa).

Residues 1–127 (MTNAESRTVL…AACIESIRYQ (127 aa)) are unknown. Residues 128-375 (CYATFRELEL…SSDVCPLPND (248 aa)) form a thiamine-phosphate synthase region. 4-amino-2-methyl-5-(diphosphooxymethyl)pyrimidine contacts are provided by residues 183–185 (QLR) and Asn-215. Mg(2+) contacts are provided by Asp-216 and Glu-235. Positions 254 and 283 each coordinate 4-amino-2-methyl-5-(diphosphooxymethyl)pyrimidine. Gly-315 lines the 2-[(2R,5Z)-2-carboxy-4-methylthiazol-5(2H)-ylidene]ethyl phosphate pocket.

Belongs to the thiamine-phosphate synthase family. Mg(2+) serves as cofactor.

The catalysed reaction is 2-[(2R,5Z)-2-carboxy-4-methylthiazol-5(2H)-ylidene]ethyl phosphate + 4-amino-2-methyl-5-(diphosphooxymethyl)pyrimidine + 2 H(+) = thiamine phosphate + CO2 + diphosphate. It carries out the reaction 2-(2-carboxy-4-methylthiazol-5-yl)ethyl phosphate + 4-amino-2-methyl-5-(diphosphooxymethyl)pyrimidine + 2 H(+) = thiamine phosphate + CO2 + diphosphate. It catalyses the reaction 4-methyl-5-(2-phosphooxyethyl)-thiazole + 4-amino-2-methyl-5-(diphosphooxymethyl)pyrimidine + H(+) = thiamine phosphate + diphosphate. Its pathway is cofactor biosynthesis; thiamine diphosphate biosynthesis; thiamine phosphate from 4-amino-2-methyl-5-diphosphomethylpyrimidine and 4-methyl-5-(2-phosphoethyl)-thiazole: step 1/1. Its function is as follows. Condenses 4-methyl-5-(beta-hydroxyethyl)thiazole monophosphate (THZ-P) and 2-methyl-4-amino-5-hydroxymethyl pyrimidine pyrophosphate (HMP-PP) to form thiamine monophosphate (TMP). This Rhodopirellula baltica (strain DSM 10527 / NCIMB 13988 / SH1) protein is Thiamine-phosphate synthase (thiE).